The chain runs to 101 residues: Small ribosomal subunit protein uS14 (101 aa).

It belongs to the universal ribosomal protein uS14 family. In terms of assembly, part of the 30S ribosomal subunit. Contacts proteins S3 and S10.

In terms of biological role, binds 16S rRNA, required for the assembly of 30S particles and may also be responsible for determining the conformation of the 16S rRNA at the A site. This chain is Small ribosomal subunit protein uS14, found in Haemophilus ducreyi (strain 35000HP / ATCC 700724).